The sequence spans 321 residues: Ubiquinone biosynthesis O-methyltransferase, mitochondrial (321 aa).

Positions 102, 135, 157, and 210 each coordinate S-adenosyl-L-methionine. 3 residues coordinate Mg(2+): E211, E214, and H215.

This sequence belongs to the class I-like SAM-binding methyltransferase superfamily. UbiG/COQ3 family. As to quaternary structure, component of a multi-subunit COQ enzyme complex. Mg(2+) is required as a cofactor.

It is found in the mitochondrion inner membrane. The catalysed reaction is a 3,4-dihydroxy-5-(all-trans-polyprenyl)benzoate + S-adenosyl-L-methionine = a 4-hydroxy-3-methoxy-5-(all-trans-polyprenyl)benzoate + S-adenosyl-L-homocysteine + H(+). It catalyses the reaction a 3-demethylubiquinone + S-adenosyl-L-methionine = a ubiquinone + S-adenosyl-L-homocysteine. It carries out the reaction a 3-demethylubiquinol + S-adenosyl-L-methionine = a ubiquinol + S-adenosyl-L-homocysteine + H(+). It functions in the pathway cofactor biosynthesis; ubiquinone biosynthesis. O-methyltransferase required for two non-consecutive steps during ubiquinone biosynthesis. Catalyzes the 2 O-methylation of 3,4-dihydroxy-5-(all-trans-polyprenyl)benzoic acid into 4-hydroxy-3-methoxy-5-(all-trans-polyprenyl)benzoic acid. Also catalyzes the last step of ubiquinone biosynthesis by mediating methylation of 3-demethylubiquinone into ubiquinone. Also able to mediate the methylation of 3-demethylubiquinol into ubiquinol. The sequence is that of Ubiquinone biosynthesis O-methyltransferase, mitochondrial from Dictyostelium discoideum (Social amoeba).